A 917-amino-acid polypeptide reads, in one-letter code: Outer kinetochore KNL1 complex subunit SPC105 (917 aa).

A compositionally biased stretch (basic and acidic residues) spans 1–17 (MNVDERSRIGGREKDAG). The tract at residues 1–38 (MNVDERSRIGGREKDAGPGKGILKQNQSSQMTSSFLEN) is disordered. Over residues 24–36 (KQNQSSQMTSSFL) the composition is skewed to polar residues. At Ser77 the chain carries Phosphoserine. Disordered stretches follow at residues 93–172 (QNNE…MEMT), 235–282 (TEYE…QPME), and 324–343 (HHIDESPSEKHAFSSNKRRK). A compositionally biased stretch (polar residues) spans 106–126 (STNSPTKISSQEEPLVTSTQI). The segment covering 127–137 (DDARTEEKTAA) has biased composition (basic and acidic residues). The MELT signature appears at 146–149 (MELT). Thr149 carries the phosphothreonine; by MPS1 modification. Residues 156–170 (PDSNKASQHDPTSME) show a composition bias toward polar residues. An interacts with the BUB1-BUB3 complex region spans residues 165–183 (DPTSMEMTEVFPRSIRQKN). Short sequence motifs (MELT; degenerate) lie at residues 169–172 (MEMT) and 232–235 (IDLT). Phosphothreonine; by MPS1 is present on residues Thr172 and Thr235. Over residues 245-257 (NSVSRSTGKSSDY) the composition is skewed to polar residues. Composition is skewed to basic and acidic residues over residues 258–273 (SVERSNDKSDLSKSEN) and 324–335 (HHIDESPSEKHA). The residue at position 356 (Thr356) is a Phosphothreonine. The residue at position 380 (Ser380) is a Phosphoserine. The segment at 397–427 (DVFTIEPGTEDTGMQTATDDEEDGENVDDNG) is disordered. Residues 414–424 (TDDEEDGENVD) are compositionally biased toward acidic residues. The interval 507–638 (PILEVEAFRC…IKEEIRSLKN (132 aa)) is required for interaction with KRE28. Positions 591–628 (ELILAENLNTLKREYEKLNEEVEKVNSIRGKIRKLNEA) form a coiled coil.

Component of the KNL1/SPC105 complex composed of SPC105 and KRE28. Part of the outer kinetochore KMN network that includes the KNL1, MIS12 and NDC80 complexes. Interacts (via phosphorylated MELT motifs) with BUB1 and BUB3 in the BUB1-BUB3 complex; the interaction is direct. Interacts with the MIS12 complex subunits MTW1 (via C-terminus) and NSL1 (via C-terminus). Interacts with the NDC80 complex subunits SPC24 and SPC25. Interacts with CNN1 (via N-terminus).

It localises to the nucleus. It is found in the chromosome. Its subcellular location is the centromere. The protein resides in the kinetochore. Its function is as follows. Acts as a component of the outer kinetochore KNL1 complex that serves as a docking point for spindle assembly checkpoint components and mediates microtubule-kinetochore interactions. Kinetochores, consisting of a centromere-associated inner segment and a microtubule-contacting outer segment, play a crucial role in chromosome segregation by mediating the physical connection between centromeric DNA and spindle microtubules. The outer kinetochore is made up of the ten-subunit KMN network, comprising the MIS12, NDC80 and KNL1 complexes, and auxiliary microtubule-associated components; together they connect the outer kinetochore with the inner kinetochore, bind microtubules, and mediate interactions with mitotic checkpoint proteins that delay anaphase until chromosomes are bioriented on the spindle. Recruits the BUB1-BUB3 complex to kinetochores when phosphorylated by MPS1, to support spindle assembly checkpoint signaling; the effect is reversed by protein phosphatase 1 (PP1). The KNL1 complex is required for kinetochore binding by the kMAPs (kinetochore-bound microtubule-associated proteins) BIM1, BIK1 and SLK19, and motors CIN8 and KAR3. The protein is Outer kinetochore KNL1 complex subunit SPC105 (SPC105) of Saccharomyces cerevisiae (strain ATCC 204508 / S288c) (Baker's yeast).